We begin with the raw amino-acid sequence, 241 residues long: Small ribosomal subunit protein uS2c (241 aa).

It belongs to the universal ribosomal protein uS2 family.

The protein resides in the plastid. It is found in the chloroplast. The protein is Small ribosomal subunit protein uS2c (rps2) of Porphyra purpurea (Red seaweed).